Here is a 320-residue protein sequence, read N- to C-terminus: Variant surface glycoprotein ILTAT 1.2 (320 aa).

3 N-linked (GlcNAc...) asparagine glycosylation sites follow: Asn-146, Asn-282, and Asn-295. The interval 297–320 is disordered; the sequence is TKATENGVPVAQTQTGGSETTTEK. The segment covering 308–320 has biased composition (low complexity); that stretch reads QTQTGGSETTTEK.

It is found in the cell membrane. Functionally, VSG forms a coat on the surface of the parasite. The trypanosome evades the immune response of the host by expressing a series of antigenically distinct VSGs from an estimated 1000 VSG genes. In Trypanosoma brucei brucei, this protein is Variant surface glycoprotein ILTAT 1.2.